The primary structure comprises 343 residues: L-threonine 3-dehydrogenase (343 aa).

Position 39 (Cys-39) interacts with Zn(2+). Active-site charge relay system residues include Thr-41 and His-44. His-64, Glu-65, Cys-94, Cys-97, Cys-100, and Cys-108 together coordinate Zn(2+). NAD(+) contacts are provided by residues Ile-176, Asp-196, Arg-201, 263–265, and 287–288; these read LGI and IY.

It belongs to the zinc-containing alcohol dehydrogenase family. In terms of assembly, homotetramer. Zn(2+) serves as cofactor.

It localises to the cytoplasm. It carries out the reaction L-threonine + NAD(+) = (2S)-2-amino-3-oxobutanoate + NADH + H(+). It functions in the pathway amino-acid degradation; L-threonine degradation via oxydo-reductase pathway; glycine from L-threonine: step 1/2. Its function is as follows. Catalyzes the NAD(+)-dependent oxidation of L-threonine to 2-amino-3-ketobutyrate. In Anaeromyxobacter sp. (strain Fw109-5), this protein is L-threonine 3-dehydrogenase.